We begin with the raw amino-acid sequence, 64 residues long: DNA-directed RNA polymerase subunit Rpo10 (64 aa).

Zn(2+) is bound by residues Cys-7, Cys-10, Cys-45, and Cys-46.

Belongs to the archaeal Rpo10/eukaryotic RPB10 RNA polymerase subunit family. As to quaternary structure, part of the RNA polymerase complex. The cofactor is Zn(2+).

The protein resides in the cytoplasm. It carries out the reaction RNA(n) + a ribonucleoside 5'-triphosphate = RNA(n+1) + diphosphate. Functionally, DNA-dependent RNA polymerase (RNAP) catalyzes the transcription of DNA into RNA using the four ribonucleoside triphosphates as substrates. The chain is DNA-directed RNA polymerase subunit Rpo10 from Natronomonas pharaonis (strain ATCC 35678 / DSM 2160 / CIP 103997 / JCM 8858 / NBRC 14720 / NCIMB 2260 / Gabara) (Halobacterium pharaonis).